The sequence spans 245 residues: 14-3-3 protein zeta (245 aa).

It belongs to the 14-3-3 family. Homodimer. Present in all adult tissues examined with the highest levels in the brain.

The protein resides in the cytoplasm. Its function is as follows. Adapter protein implicated in the regulation of a large spectrum of both general and specialized signaling pathways. Binds to a large number of partners, usually by recognition of a phosphoserine or phosphothreonine motif. Binding generally results in the modulation of the activity of the binding partner. The sequence is that of 14-3-3 protein zeta (ywhaz) from Xenopus laevis (African clawed frog).